Consider the following 125-residue polypeptide: Fluoride-specific ion channel FluC (125 aa).

Helical transmembrane passes span 36–56, 65–85, and 99–119; these read GTIF…FLSI, FILF…TFAY, and IIYF…GMFL. Residues glycine 75 and threonine 78 each contribute to the Na(+) site.

Belongs to the fluoride channel Fluc/FEX (TC 1.A.43) family.

It localises to the cell inner membrane. The enzyme catalyses fluoride(in) = fluoride(out). Na(+) is not transported, but it plays an essential structural role and its presence is essential for fluoride channel function. Its function is as follows. Fluoride-specific ion channel. Important for reducing fluoride concentration in the cell, thus reducing its toxicity. This is Fluoride-specific ion channel FluC from Thermosipho africanus (strain TCF52B).